Reading from the N-terminus, the 150-residue chain is Snaclec CTL-Eoc125 (150 aa).

The first 23 residues, 1–23, serve as a signal peptide directing secretion; it reads MGRFISVSFGLLVVFLSLSGIGA. 3 disulfides stabilise this stretch: cysteine 27–cysteine 38, cysteine 55–cysteine 144, and cysteine 121–cysteine 136. The region spanning 34–145 is the C-type lectin domain; it reads YEGHCYKVFS…CSSTQQFICK (112 aa).

Belongs to the snaclec family. Heterodimer; disulfide-linked. Expressed by the venom gland.

The protein localises to the secreted. Its function is as follows. Interferes with one step of hemostasis (modulation of platelet aggregation, or coagulation cascade, for example). This Echis ocellatus (Ocellated saw-scaled viper) protein is Snaclec CTL-Eoc125.